Consider the following 163-residue polypeptide: Cyanate hydratase (163 aa).

Residues Arg103, Glu106, and Ser129 contribute to the active site.

The protein belongs to the cyanase family.

It carries out the reaction cyanate + hydrogencarbonate + 3 H(+) = NH4(+) + 2 CO2. Catalyzes the reaction of cyanate with bicarbonate to produce ammonia and carbon dioxide. The chain is Cyanate hydratase from Ajellomyces capsulatus (strain G186AR / H82 / ATCC MYA-2454 / RMSCC 2432) (Darling's disease fungus).